The primary structure comprises 1084 residues: Carbamoyl phosphate synthase large chain (1084 aa).

Positions 1–401 (MPRRQDVEKV…ALLKAVRSLE (401 aa)) are carboxyphosphate synthetic domain. ATP is bound by residues Arg-129, Arg-169, Gly-175, Gly-176, Arg-208, Leu-210, Glu-215, Gly-241, Val-242, His-243, Gln-284, and Glu-298. Residues 133 to 327 (RALMKEIGEP…IAKVAAKIAV (195 aa)) form the ATP-grasp 1 domain. Residues Gln-284, Glu-298, and Asn-300 each coordinate Mg(2+). The Mn(2+) site is built by Gln-284, Glu-298, and Asn-300. The tract at residues 402 to 546 (TGRDGLFHPA…YSCYDEENEA (145 aa)) is oligomerization domain. The interval 547-947 (VSPPGRKAVV…ALYKALLASG (401 aa)) is carbamoyl phosphate synthetic domain. The 191-residue stretch at 672–862 (DQLLSDLSIP…LAKVATQVIA (191 aa)) folds into the ATP-grasp 2 domain. ATP-binding residues include Arg-708, Arg-747, Glu-753, Gly-778, Val-779, His-780, Ser-781, Gln-821, and Glu-833. Residues Gln-821, Glu-833, and Asn-835 each coordinate Mg(2+). Residues Gln-821, Glu-833, and Asn-835 each contribute to the Mn(2+) site. An MGS-like domain is found at 948-1084 (VRVPHRGTVL…VGISAVQDWV (137 aa)). The segment at 948–1084 (VRVPHRGTVL…VGISAVQDWV (137 aa)) is allosteric domain.

It belongs to the CarB family. In terms of assembly, composed of two chains; the small (or glutamine) chain promotes the hydrolysis of glutamine to ammonia, which is used by the large (or ammonia) chain to synthesize carbamoyl phosphate. Tetramer of heterodimers (alpha,beta)4. Mg(2+) serves as cofactor. The cofactor is Mn(2+).

It catalyses the reaction hydrogencarbonate + L-glutamine + 2 ATP + H2O = carbamoyl phosphate + L-glutamate + 2 ADP + phosphate + 2 H(+). The catalysed reaction is hydrogencarbonate + NH4(+) + 2 ATP = carbamoyl phosphate + 2 ADP + phosphate + 2 H(+). The protein operates within amino-acid biosynthesis; L-arginine biosynthesis; carbamoyl phosphate from bicarbonate: step 1/1. It functions in the pathway pyrimidine metabolism; UMP biosynthesis via de novo pathway; (S)-dihydroorotate from bicarbonate: step 1/3. Its function is as follows. Large subunit of the glutamine-dependent carbamoyl phosphate synthetase (CPSase). CPSase catalyzes the formation of carbamoyl phosphate from the ammonia moiety of glutamine, carbonate, and phosphate donated by ATP, constituting the first step of 2 biosynthetic pathways, one leading to arginine and/or urea and the other to pyrimidine nucleotides. The large subunit (synthetase) binds the substrates ammonia (free or transferred from glutamine from the small subunit), hydrogencarbonate and ATP and carries out an ATP-coupled ligase reaction, activating hydrogencarbonate by forming carboxy phosphate which reacts with ammonia to form carbamoyl phosphate. The chain is Carbamoyl phosphate synthase large chain from Symbiobacterium thermophilum (strain DSM 24528 / JCM 14929 / IAM 14863 / T).